The following is a 322-amino-acid chain: Cytochrome c biogenesis protein CcsA (322 aa).

8 consecutive transmembrane segments (helical) span residues 9–29, 44–64, 71–91, 98–118, 143–163, 226–246, 253–273, and 287–307; these read ILTHISFSIVSIVITLHLITL, GMIATFLCLTGLLITRWIYSG, LYESFIFLSWSFSLIHIVPYF, LTTITASSTIFTQGFATSGLL, MILSYAALLCGSLLSVALLVI, VISLGFIFLTIGILSGAVWAN, WSWDPKETWAFITWIVFAIYL, and AIVATLGFLIIWICYFGVNLL.

The protein belongs to the CcmF/CycK/Ccl1/NrfE/CcsA family. As to quaternary structure, may interact with Ccs1.

It localises to the plastid. The protein resides in the chloroplast thylakoid membrane. Functionally, required during biogenesis of c-type cytochromes (cytochrome c6 and cytochrome f) at the step of heme attachment. This Guizotia abyssinica (Niger) protein is Cytochrome c biogenesis protein CcsA.